A 773-amino-acid polypeptide reads, in one-letter code: Pentatricopeptide repeat-containing protein At1g76280 (773 aa).

PPR repeat units follow at residues 130–165 (DSRS…RISP), 166–200 (LLPI…RVGK), 201–231 (NGIT…YVNH), 235–269 (DILS…ALRG), 332–369 (LRWS…NLKP), 370–400 (YDST…ISEC), 402–436 (YSYP…KLRP), 524–558 (GTPT…GCPA), 559–593 (DVAT…GFSP), 594–628 (KAVT…EIHL), and 629–663 (DVLS…KVNP).

The protein belongs to the PPR family. P subfamily.

The sequence is that of Pentatricopeptide repeat-containing protein At1g76280 from Arabidopsis thaliana (Mouse-ear cress).